We begin with the raw amino-acid sequence, 124 residues long: Small ribosomal subunit protein uS12 (124 aa).

The segment at 8-30 (IRSARQDTEKQTKSPALKSCPQR) is disordered. D89 is subject to 3-methylthioaspartic acid. The interval 103-124 (DTAGVKDRKQSRSKYGAKKPKA) is disordered. Positions 113 to 124 (SRSKYGAKKPKA) are enriched in basic residues.

Belongs to the universal ribosomal protein uS12 family. As to quaternary structure, part of the 30S ribosomal subunit. Contacts proteins S8 and S17. May interact with IF1 in the 30S initiation complex.

Functionally, with S4 and S5 plays an important role in translational accuracy. Its function is as follows. Interacts with and stabilizes bases of the 16S rRNA that are involved in tRNA selection in the A site and with the mRNA backbone. Located at the interface of the 30S and 50S subunits, it traverses the body of the 30S subunit contacting proteins on the other side and probably holding the rRNA structure together. The combined cluster of proteins S8, S12 and S17 appears to hold together the shoulder and platform of the 30S subunit. This Trichodesmium erythraeum (strain IMS101) protein is Small ribosomal subunit protein uS12.